A 185-amino-acid chain; its full sequence is Elongation factor P 1 (185 aa).

Belongs to the elongation factor P family.

The protein localises to the cytoplasm. The protein operates within protein biosynthesis; polypeptide chain elongation. Involved in peptide bond synthesis. Stimulates efficient translation and peptide-bond synthesis on native or reconstituted 70S ribosomes in vitro. Probably functions indirectly by altering the affinity of the ribosome for aminoacyl-tRNA, thus increasing their reactivity as acceptors for peptidyl transferase. This chain is Elongation factor P 1 (efp1), found in Chlamydia pneumoniae (Chlamydophila pneumoniae).